Reading from the N-terminus, the 227-residue chain is Cytochrome c oxidase subunit 2 (227 aa).

Residues 1–14 lie on the Mitochondrial intermembrane side of the membrane; that stretch reads MAHPAQLGLQDATS. Residues 15 to 45 form a helical membrane-spanning segment; sequence PVMEELITFHDHALMAMSLISLLVLYALFST. The Mitochondrial matrix portion of the chain corresponds to 46–59; sequence LTTKMTNTNITDAQ. Residues 60–87 form a helical membrane-spanning segment; that stretch reads EMETIWTILPAIILVLIAFPSLRILYMT. The Mitochondrial intermembrane portion of the chain corresponds to 88–227; that stretch reads DEVNNPSFTI…IFEMGPVFTL (140 aa). Cu cation contacts are provided by His-161, Cys-196, Glu-198, Cys-200, His-204, and Met-207. Residue Glu-198 coordinates Mg(2+).

Belongs to the cytochrome c oxidase subunit 2 family. As to quaternary structure, component of the cytochrome c oxidase (complex IV, CIV), a multisubunit enzyme composed of 14 subunits. The complex is composed of a catalytic core of 3 subunits MT-CO1, MT-CO2 and MT-CO3, encoded in the mitochondrial DNA, and 11 supernumerary subunits COX4I, COX5A, COX5B, COX6A, COX6B, COX6C, COX7A, COX7B, COX7C, COX8 and NDUFA4, which are encoded in the nuclear genome. The complex exists as a monomer or a dimer and forms supercomplexes (SCs) in the inner mitochondrial membrane with NADH-ubiquinone oxidoreductase (complex I, CI) and ubiquinol-cytochrome c oxidoreductase (cytochrome b-c1 complex, complex III, CIII), resulting in different assemblies (supercomplex SCI(1)III(2)IV(1) and megacomplex MCI(2)III(2)IV(2)). Found in a complex with TMEM177, COA6, COX18, COX20, SCO1 and SCO2. Interacts with TMEM177 in a COX20-dependent manner. Interacts with COX20. Interacts with COX16. Requires Cu cation as cofactor.

The protein resides in the mitochondrion inner membrane. It carries out the reaction 4 Fe(II)-[cytochrome c] + O2 + 8 H(+)(in) = 4 Fe(III)-[cytochrome c] + 2 H2O + 4 H(+)(out). Component of the cytochrome c oxidase, the last enzyme in the mitochondrial electron transport chain which drives oxidative phosphorylation. The respiratory chain contains 3 multisubunit complexes succinate dehydrogenase (complex II, CII), ubiquinol-cytochrome c oxidoreductase (cytochrome b-c1 complex, complex III, CIII) and cytochrome c oxidase (complex IV, CIV), that cooperate to transfer electrons derived from NADH and succinate to molecular oxygen, creating an electrochemical gradient over the inner membrane that drives transmembrane transport and the ATP synthase. Cytochrome c oxidase is the component of the respiratory chain that catalyzes the reduction of oxygen to water. Electrons originating from reduced cytochrome c in the intermembrane space (IMS) are transferred via the dinuclear copper A center (CU(A)) of subunit 2 and heme A of subunit 1 to the active site in subunit 1, a binuclear center (BNC) formed by heme A3 and copper B (CU(B)). The BNC reduces molecular oxygen to 2 water molecules using 4 electrons from cytochrome c in the IMS and 4 protons from the mitochondrial matrix. This is Cytochrome c oxidase subunit 2 (MT-CO2) from Mandrillus leucophaeus (Drill).